We begin with the raw amino-acid sequence, 528 residues long: Xylose import ATP-binding protein XylG (528 aa).

ABC transporter domains are found at residues 6-245 and 262-507; these read LQMN…VGRE and FEAR…LSHP. 38–45 is a binding site for ATP; sequence GENGAGKS. Residues 504–528 are disordered; sequence LSHPGDPDSNDPANNNHNDNDRKTT.

This sequence belongs to the ABC transporter superfamily. Xylose importer (TC 3.A.1.2.4) family. In terms of assembly, the complex is composed of two ATP-binding proteins (XylG), two transmembrane proteins (XylH) and a solute-binding protein (XylF).

It is found in the cell inner membrane. The enzyme catalyses D-xylose(out) + ATP + H2O = D-xylose(in) + ADP + phosphate + H(+). Its function is as follows. Part of the ABC transporter complex XylFGH involved in xylose import. Responsible for energy coupling to the transport system. The protein is Xylose import ATP-binding protein XylG of Pseudomonas syringae pv. tomato (strain ATCC BAA-871 / DC3000).